Consider the following 236-residue polypeptide: tRNA1(Val) (adenine(37)-N6)-methyltransferase (236 aa).

Belongs to the methyltransferase superfamily. tRNA (adenine-N(6)-)-methyltransferase family.

Its subcellular location is the cytoplasm. The enzyme catalyses adenosine(37) in tRNA1(Val) + S-adenosyl-L-methionine = N(6)-methyladenosine(37) in tRNA1(Val) + S-adenosyl-L-homocysteine + H(+). Functionally, specifically methylates the adenine in position 37 of tRNA(1)(Val) (anticodon cmo5UAC). This chain is tRNA1(Val) (adenine(37)-N6)-methyltransferase, found in Shewanella sp. (strain MR-7).